Reading from the N-terminus, the 253-residue chain is 5-oxoprolinase subunit A (253 aa).

The protein belongs to the LamB/PxpA family. In terms of assembly, forms a complex composed of PxpA, PxpB and PxpC.

The enzyme catalyses 5-oxo-L-proline + ATP + 2 H2O = L-glutamate + ADP + phosphate + H(+). Catalyzes the cleavage of 5-oxoproline to form L-glutamate coupled to the hydrolysis of ATP to ADP and inorganic phosphate. This is 5-oxoprolinase subunit A from Bacillus cereus (strain 03BB102).